An 896-amino-acid chain; its full sequence is Alanine--tRNA ligase (896 aa).

4 residues coordinate Zn(2+): His-599, His-603, Cys-707, and His-711.

It belongs to the class-II aminoacyl-tRNA synthetase family. It depends on Zn(2+) as a cofactor.

Its subcellular location is the cytoplasm. It carries out the reaction tRNA(Ala) + L-alanine + ATP = L-alanyl-tRNA(Ala) + AMP + diphosphate. In terms of biological role, catalyzes the attachment of alanine to tRNA(Ala) in a two-step reaction: alanine is first activated by ATP to form Ala-AMP and then transferred to the acceptor end of tRNA(Ala). Also edits incorrectly charged Ser-tRNA(Ala) and Gly-tRNA(Ala) via its editing domain. The polypeptide is Alanine--tRNA ligase (Pyrobaculum calidifontis (strain DSM 21063 / JCM 11548 / VA1)).